A 108-amino-acid chain; its full sequence is uncharacterized protein (108 aa).

This is an uncharacterized protein from Acidianus sp. F28 (AFV-2).